The chain runs to 407 residues: Serine/threonine transporter SstT (407 aa).

Transmembrane regions (helical) follow at residues glycine 12–serine 32, leucine 42–isoleucine 62, isoleucine 81–phenylalanine 101, alanine 141–leucine 161, valine 179–alanine 199, isoleucine 218–phenylalanine 238, phenylalanine 245–alanine 267, isoleucine 288–leucine 308, and isoleucine 330–isoleucine 350.

The protein belongs to the dicarboxylate/amino acid:cation symporter (DAACS) (TC 2.A.23) family.

The protein resides in the cell inner membrane. It carries out the reaction L-serine(in) + Na(+)(in) = L-serine(out) + Na(+)(out). The catalysed reaction is L-threonine(in) + Na(+)(in) = L-threonine(out) + Na(+)(out). Involved in the import of serine and threonine into the cell, with the concomitant import of sodium (symport system). This chain is Serine/threonine transporter SstT, found in Campylobacter jejuni subsp. jejuni serotype O:2 (strain ATCC 700819 / NCTC 11168).